The following is a 128-amino-acid chain: NHP2-like protein 1 (128 aa).

The tract at residues 36 to 48 (RKGANEATKTLNR) is interaction with U4 snRNA and U4atac snRNA. The interval 96 to 128 (SRPVIACSVTIKEGSQLKPQIQSVQQAIERLLV) is important for U4 snRNA-binding.

Belongs to the eukaryotic ribosomal protein eL8 family. In terms of assembly, identified in the spliceosome B complex. Component of the U4/U6-U5 tri-snRNP complex. Part of the small subunit (SSU) processome, composed of more than 70 proteins and the RNA chaperone small nucleolar RNA (snoRNA) U3.

The protein localises to the nucleus. Its subcellular location is the nucleolus. Part of the small subunit (SSU) processome, first precursor of the small eukaryotic ribosomal subunit. During the assembly of the SSU processome in the nucleolus, many ribosome biogenesis factors, an RNA chaperone and ribosomal proteins associate with the nascent pre-rRNA and work in concert to generate RNA folding, modifications, rearrangements and cleavage as well as targeted degradation of pre-ribosomal RNA by the RNA exosome. Involved in pre-mRNA splicing as component of the spliceosome. Binds to the 5'-stem-loop of U4 snRNA and thereby contributes to spliceosome assembly. The protein undergoes a conformational change upon RNA-binding. Core component of box C/D small nucleolar ribonucleoprotein (snoRNP) complexes that function in methylation of multiple sites on ribosomal RNAs (rRNAs) and messenger RNAs (mRNAs). In Xenopus laevis (African clawed frog), this protein is NHP2-like protein 1.